We begin with the raw amino-acid sequence, 1088 residues long: Ran-binding protein 17 (1088 aa).

Position 2 is an N-acetylalanine (A2). S569 bears the Phosphoserine mark.

The protein belongs to the exportin family. As to quaternary structure, binds to nucleoporins and the GTP-bound form of Ran. As to expression, highly expressed in testis, moderately in pancreas and weakly in other tissues studied.

Its subcellular location is the cytoplasm. The protein localises to the nucleus. It is found in the nuclear pore complex. May function as a nuclear transport receptor. In Homo sapiens (Human), this protein is Ran-binding protein 17 (RANBP17).